The following is a 214-amino-acid chain: Putative F-box protein At3g58910 (214 aa).

One can recognise an F-box domain in the interval 1–47 (MDRVSSLPDELLCHILSFLTTKETALTSLLSKREIIPLIKSVVFPTL).

This Arabidopsis thaliana (Mouse-ear cress) protein is Putative F-box protein At3g58910.